A 733-amino-acid chain; its full sequence is Vinexin (733 aa).

4 disordered regions span residues M1–D51, T129–K165, S224–P285, and E352–A448. Basic and acidic residues predominate over residues D32–L42. Polar residues predominate over residues Q147 to T157. The SoHo domain occupies D164–P232. 2 stretches are compositionally biased toward polar residues: residues P245–W256 and R264–G277. Phosphoserine is present on residues S412 and S459. SH3 domains are found at residues K444 to A503 and L518 to E579. The binds to vinculin stretch occupies residues K444–E579. The segment at L584–T672 is disordered. S594 bears the Phosphoserine; by MAPK1 mark. Residues P597–P613 show a composition bias toward low complexity. Phosphoserine occurs at positions 607, 610, and 624. Over residues E638–P651 the composition is skewed to polar residues. The region spanning I674–V733 is the SH3 3 domain. Residues I674–V733 form a binds to SOS region.

Interacts with vinculin by the first two SH3 domains and the proline rich region of vinculin. Binds to SOS (guanine nucleotide exchange factor of RAS and RAC), through its third SH3 domain. The formation of this complex is down-regulated by phosphorylation of SOS. Interacts with SAFB2, INPPL1/SHIP2 and SRCIN1. Interacts with DLG5 through its third SH3 domain. Interacts with SOCS7 and MAPK1/ERK2. Interacts with FASLG. In terms of processing, phosphorylated at Ser-594 by MAPK1/ERK2 during cell spreading.

Its subcellular location is the cell junction. The protein localises to the focal adhesion. The protein resides in the cytoplasm. It localises to the cytoskeleton. In terms of biological role, promotes up-regulation of actin stress fiber formation. The protein is Vinexin (Sorbs3) of Mus musculus (Mouse).